The primary structure comprises 450 residues: Glutathione reductase (450 aa).

FAD contacts are provided by Ser14, Gly15, Glu34, Thr41, Cys42, Lys50, and Ala115. Residue Ser14 participates in glutathione binding. Cysteines 42 and 47 form a disulfide. NADP(+) is bound by residues Ala175, Ile178, Glu181, Arg198, Arg204, and Gly262. Asp303 serves as a coordination point for FAD. Asp309 lines the NADP(+) pocket. Thr311 contacts FAD. Glutathione is bound at residue Arg319. Val342 serves as a coordination point for NADP(+). His439 contributes to the FAD binding site. The active-site Proton acceptor is the His439.

The protein belongs to the class-I pyridine nucleotide-disulfide oxidoreductase family. As to quaternary structure, homodimer. The cofactor is FAD.

The protein localises to the cytoplasm. The enzyme catalyses 2 glutathione + NADP(+) = glutathione disulfide + NADPH + H(+). In terms of biological role, catalyzes the reduction of glutathione disulfide (GSSG) to reduced glutathione (GSH). Constitutes the major mechanism to maintain a high GSH:GSSG ratio in the cytosol. This Streptococcus thermophilus protein is Glutathione reductase (gor).